Here is a 319-residue protein sequence, read N- to C-terminus: Large ribosomal subunit protein eL8 (319 aa).

Residue Lys-87 is modified to N6-acetyllysine. A Glycyl lysine isopeptide (Lys-Gly) (interchain with G-Cter in SUMO2) cross-link involves residue Lys-101. Lys-150 is modified (N6-acetyllysine; alternate). Lys-150 is covalently cross-linked (Glycyl lysine isopeptide (Lys-Gly) (interchain with G-Cter in SUMO2); alternate). Lys-178 is covalently cross-linked (Glycyl lysine isopeptide (Lys-Gly) (interchain with G-Cter in SUMO2)). Lys-270 carries the N6-acetyllysine modification. Lys-298 is covalently cross-linked (Glycyl lysine isopeptide (Lys-Gly) (interchain with G-Cter in SUMO2)).

Belongs to the eukaryotic ribosomal protein eL8 family. As to quaternary structure, component of the large ribosomal subunit. Interacts with CRY1. Interacts with DICER1, AGO2, TARBP2, MOV10 and EIF6; they form a large RNA-induced silencing complex (RISC).

The protein resides in the cytoplasm. Component of the large ribosomal subunit. The ribosome is a large ribonucleoprotein complex responsible for the synthesis of proteins in the cell. This Oryctolagus cuniculus (Rabbit) protein is Large ribosomal subunit protein eL8 (RPL7A).